The sequence spans 292 residues: Protein/nucleic acid deglycase HchA (292 aa).

Residues 1–12 are compositionally biased toward polar residues; sequence MSQDVNKLSKQP. The segment at 1–23 is disordered; that stretch reads MSQDVNKLSKQPTPDKAEDNAFF. The Nucleophile role is filled by Cys-190.

The protein belongs to the peptidase C56 family. HchA subfamily.

Its subcellular location is the cytoplasm. It catalyses the reaction N(omega)-(1-hydroxy-2-oxopropyl)-L-arginyl-[protein] + H2O = lactate + L-arginyl-[protein] + H(+). It carries out the reaction N(6)-(1-hydroxy-2-oxopropyl)-L-lysyl-[protein] + H2O = lactate + L-lysyl-[protein] + H(+). The enzyme catalyses S-(1-hydroxy-2-oxopropyl)-L-cysteinyl-[protein] + H2O = lactate + L-cysteinyl-[protein] + H(+). The catalysed reaction is N(omega)-(1-hydroxy-2-oxoethyl)-L-arginyl-[protein] + H2O = L-arginyl-[protein] + glycolate + H(+). It catalyses the reaction N(6)-(1-hydroxy-2-oxoethyl)-L-lysyl-[protein] + H2O = glycolate + L-lysyl-[protein] + H(+). It carries out the reaction S-(1-hydroxy-2-oxoethyl)-L-cysteinyl-[protein] + H2O = glycolate + L-cysteinyl-[protein] + H(+). The enzyme catalyses N(2)-(1-hydroxy-2-oxopropyl)-dGTP + H2O = lactate + dGTP + H(+). The catalysed reaction is N(2)-(1-hydroxy-2-oxopropyl)-GTP + H2O = lactate + GTP + H(+). It catalyses the reaction N(2)-(1-hydroxy-2-oxopropyl)-GDP + H2O = lactate + GDP + H(+). It carries out the reaction N(2)-(1-hydroxy-2-oxopropyl)-GMP + H2O = lactate + GMP + H(+). The enzyme catalyses N(2)-(1-hydroxy-2-oxoethyl)-dGTP + H2O = dGTP + glycolate + H(+). The catalysed reaction is N(2)-(1-hydroxy-2-oxoethyl)-GTP + H2O = glycolate + GTP + H(+). It catalyses the reaction N(2)-(1-hydroxy-2-oxoethyl)-GDP + H2O = glycolate + GDP + H(+). It carries out the reaction N(2)-(1-hydroxy-2-oxoethyl)-GMP + H2O = glycolate + GMP + H(+). The enzyme catalyses an N(2)-(1-hydroxy-2-oxopropyl)-guanosine in RNA + H2O = a guanosine in RNA + lactate + H(+). The catalysed reaction is an N(2)-(1-hydroxy-2-oxopropyl)-2'-deoxyguanosine in DNA + H2O = a 2'-deoxyguanosine in DNA + lactate + H(+). It catalyses the reaction an N(2)-(1-hydroxy-2-oxoethyl)-guanosine in RNA + H2O = a guanosine in RNA + glycolate + H(+). It carries out the reaction an N(2)-(1-hydroxy-2-oxoethyl)-2'-deoxyguanosine in DNA + H2O = a 2'-deoxyguanosine in DNA + glycolate + H(+). In terms of biological role, protein and nucleotide deglycase that catalyzes the deglycation of the Maillard adducts formed between amino groups of proteins or nucleotides and reactive carbonyl groups of glyoxals. Thus, functions as a protein deglycase that repairs methylglyoxal- and glyoxal-glycated proteins, and releases repaired proteins and lactate or glycolate, respectively. Deglycates cysteine, arginine and lysine residues in proteins, and thus reactivates these proteins by reversing glycation by glyoxals. Acts on early glycation intermediates (hemithioacetals and aminocarbinols), preventing the formation of Schiff bases and advanced glycation endproducts (AGE). Also functions as a nucleotide deglycase able to repair glycated guanine in the free nucleotide pool (GTP, GDP, GMP, dGTP) and in DNA and RNA. Is thus involved in a major nucleotide repair system named guanine glycation repair (GG repair), dedicated to reversing methylglyoxal and glyoxal damage via nucleotide sanitization and direct nucleic acid repair. Plays an important role in protecting cells from carbonyl stress. The sequence is that of Protein/nucleic acid deglycase HchA from Staphylococcus aureus (strain MRSA252).